A 286-amino-acid polypeptide reads, in one-letter code: ATP synthase gamma chain (286 aa).

This sequence belongs to the ATPase gamma chain family. F-type ATPases have 2 components, CF(1) - the catalytic core - and CF(0) - the membrane proton channel. CF(1) has five subunits: alpha(3), beta(3), gamma(1), delta(1), epsilon(1). CF(0) has three main subunits: a, b and c.

Its subcellular location is the cell inner membrane. Functionally, produces ATP from ADP in the presence of a proton gradient across the membrane. The gamma chain is believed to be important in regulating ATPase activity and the flow of protons through the CF(0) complex. The sequence is that of ATP synthase gamma chain from Shewanella amazonensis (strain ATCC BAA-1098 / SB2B).